Consider the following 388-residue polypeptide: Proteasomal ubiquitin receptor ADRM1 homolog rpn1302 (388 aa).

The 118-residue stretch at 15-132 folds into the Pru domain; it reads RGKYGLVSVK…SLINQLIADP (118 aa). Disordered regions lie at residues 202–227 and 368–388; these read RASSESNLNGPHATAGENGEDHEEAT and SDGEVEEEGDVEMRESNEKDE. Residues 368–377 show a composition bias toward acidic residues; that stretch reads SDGEVEEEGD. The segment covering 378-388 has biased composition (basic and acidic residues); that stretch reads VEMRESNEKDE.

This sequence belongs to the ADRM1 family. Component of the 19S proteasome regulatory particle complex. The 2 S.pombe rpn13 homologs, rpn1301 and rpn1302 are present at a 0.2-1 ratio.

It is found in the cytoplasm. Its subcellular location is the nucleus. Its function is as follows. Component of the 26S proteasome, a multiprotein complex involved in the ATP-dependent degradation of ubiquitinated proteins. This complex plays a key role in the maintenance of protein homeostasis by removing misfolded or damaged proteins, which could impair cellular functions, and by removing proteins whose functions are no longer required. Therefore, the proteasome participates in numerous cellular processes, including cell cycle progression, apoptosis, or DNA damage repair. Within the complex, functions as a proteasomal ubiquitin receptor. This is Proteasomal ubiquitin receptor ADRM1 homolog rpn1302 (rpn1302) from Schizosaccharomyces pombe (strain 972 / ATCC 24843) (Fission yeast).